A 393-amino-acid polypeptide reads, in one-letter code: 4-hydroxyphenylpyruvate dioxygenase (393 aa).

Thr2 is subject to N-acetylthreonine. VOC domains lie at 18-149 (HFHS…LVEK) and 180-338 (IIDH…IFTK). Position 132 is an N6-succinyllysine (Lys132). Position 183 (His183) interacts with Fe cation. 3 positions are modified to phosphoserine: Ser211, Ser226, and Ser250. His266 and Glu349 together coordinate Fe cation.

It belongs to the 4HPPD family. As to quaternary structure, homodimer. It depends on Fe cation as a cofactor.

The protein resides in the cytoplasm. Its subcellular location is the endoplasmic reticulum membrane. The protein localises to the golgi apparatus membrane. The catalysed reaction is 3-(4-hydroxyphenyl)pyruvate + O2 = homogentisate + CO2. It participates in amino-acid degradation; L-phenylalanine degradation; acetoacetate and fumarate from L-phenylalanine: step 3/6. Its function is as follows. Catalyzes the conversion of 4-hydroxyphenylpyruvic acid to homogentisic acid, one of the steps in tyrosine catabolism. The chain is 4-hydroxyphenylpyruvate dioxygenase (HPD) from Bos taurus (Bovine).